The chain runs to 469 residues: Endoplasmic reticulum oxidoreductin-1 (469 aa).

Residues 1–36 (MGKGAIKEEESEKKRKTWRWPLATLVVVFLAVAVSS) form the signal peptide. 6 cysteine pairs are disulfide-bonded: Cys52–Cys71, Cys54–Cys69, Cys108–Cys372, Cys117–Cys122, Cys222–Cys231, and Cys375–Cys378. FAD contacts are provided by Arg201, Thr203, and Trp214. FAD contacts are provided by Ser242, His245, Arg275, and Arg282. An N-linked (GlcNAc...) asparagine glycan is attached at Asn365.

The protein belongs to the EROs family. In terms of assembly, may function both as a monomer and a homodimer. It depends on FAD as a cofactor. N-glycosylated.

It is found in the endoplasmic reticulum membrane. Essential oxidoreductase that oxidizes proteins in the endoplasmic reticulum to produce disulfide bonds. Acts by oxidizing directly PDI isomerase through a direct disulfide exchange. Does not act as a direct oxidant of folding substrate, but relies on PDI to transfer oxidizing equivalent. Does not oxidize all PDI related proteins, suggesting that it can discriminate between PDI and related proteins. Its reoxidation probably involves electron transfer to molecular oxygen via FAD. Acts independently of glutathione. May be responsible for a significant proportion of reactive oxygen species (ROS) in the cell, thereby being a source of oxidative stress. This Arabidopsis thaliana (Mouse-ear cress) protein is Endoplasmic reticulum oxidoreductin-1 (AERO1).